The primary structure comprises 344 residues: uncharacterized protein (344 aa).

At 1–98 (MIDFVKSRDT…NNDEIGIWNY (98 aa)) the chain is on the cytoplasmic side. The helical transmembrane segment at 99-119 (ISVAEMGGVLLFLSYWIWTCL) threads the bilayer. Histidine 120 is a topological domain (lumenal). The helical transmembrane segment at 121–141 (FSKIIFPAQKVICLYIFLFAL) threads the bilayer. At 142–198 (NQTLQECIEEYVFSSECIKYRQFYSVYEIIDFLRTNFYRLFVIYCALGFGITRTVPK) the chain is on the cytoplasmic side. A helical transmembrane segment spans residues 199-219 (YLMIKGISIVIALCSVYWISL). Residues 220-222 (YKD) lie on the Lumenal side of the membrane. The helical transmembrane segment at 223 to 243 (VYVVSEIFDMIQYEVSPAIWV) threads the bilayer. At 244–273 (YSICHLLKQCTSVTTYENASKARFFRRMLN) the chain is on the cytoplasmic side. A helical transmembrane segment spans residues 274 to 294 (AFIFIFCASPMLHYLSNIIFG). Topologically, residues 295-344 (NFDYRLSVIIGDLFTFMEKIAFPCYIMFPTHNEALAYNRNVAEEAQEKMI) are lumenal.

The protein belongs to the UPF0742 family.

The protein localises to the endoplasmic reticulum. It localises to the membrane. This is an uncharacterized protein from Schizosaccharomyces pombe (strain 972 / ATCC 24843) (Fission yeast).